A 267-amino-acid chain; its full sequence is X-box-binding protein 1 (267 aa).

The Cytoplasmic portion of the chain corresponds to 1-180; the sequence is MVVVAAAPSA…VQAQLSPPQN (180 aa). Residues 35-60 form a disordered region; it reads VPGPRAAGSEASGTPQARKRQRLTHL. At S61 the chain carries Phosphoserine. Positions 63–126 constitute a bZIP domain; it reads EEKALRRKLK…HGLVIENQEL (64 aa). A basic motif region spans residues 65–87; it reads KALRRKLKNRVAAQTARDRKKAR. Residues 69–85 form a nuclear localization signal (NLS) region; the sequence is RKLKNRVAAQTARDRKK. The segment at 91 to 126 is leucine-zipper; it reads LEQQVVDLEEENQKLQLENQLLREKTHGLVIENQEL. The chain crosses the membrane as a helical; Signal-anchor for type II membrane protein span at residues 181-198; the sequence is IFPWILTLLPLQILSLIS. Over 199-267 the chain is Lumenal; sequence FWAFWTSWTL…FVLTMYTPSL (69 aa).

The protein belongs to the bZIP family. Isoform 1 interacts with HM13. Isoform 1 interacts with RNF139; the interaction induces ubiquitination and degradation of isoform 1. Isoform 1 interacts (via luminal domain) with DERL1; the interaction obviates the need for ectodomain shedding prior HM13/SPP-mediated XBP1 isoform 1 cleavage. Isoform 1 interacts with HDAC3 and AKT1; the interactions occur in endothelial cell (EC) under disturbed flow. Isoform 1 interacts with the oncoprotein FOS. Interacts with SIRT1. Post-translationally, isoform 1 is ubiquitinated, leading to proteasome-mediated degradation in response to ER stress. X-box-binding protein 1, cytoplasmic form and luminal form are produced by intramembrane proteolytic cleavage of ER membrane-anchored isoform 1 triggered by HM13/SPP in a DERL1-RNF139-dependent and VCP/p97-independent manner. X-box-binding protein 1, luminal form is ubiquitinated leading to proteasomal degradation. In terms of processing, acetylated by EP300; acetylation positively regulates the transcriptional activity of XBP1. Deacetylated by SIRT1; deacetylation negatively regulates the transcriptional activity of XBP1.

It is found in the nucleus. Its subcellular location is the endoplasmic reticulum. The protein resides in the cytoplasm. The protein localises to the endoplasmic reticulum membrane. It localises to the membrane. In terms of biological role, functions as a transcription factor during endoplasmic reticulum (ER) stress by regulating the unfolded protein response (UPR). Required for cardiac myogenesis and hepatogenesis during embryonic development, and the development of secretory tissues such as exocrine pancreas and salivary gland. Involved in terminal differentiation of B lymphocytes to plasma cells and production of immunoglobulins. Modulates the cellular response to ER stress in a PIK3R-dependent manner. Binds to the cis-acting X box present in the promoter regions of major histocompatibility complex class II genes. Involved in VEGF-induced endothelial cell (EC) proliferation and retinal blood vessel formation during embryonic development but also for angiogenesis in adult tissues under ischemic conditions. Functions also as a major regulator of the UPR in obesity-induced insulin resistance and type 2 diabetes for the management of obesity and diabetes prevention. Acts as a weak transcriptional factor. Together with HDAC3, contributes to the activation of NFE2L2-mediated HMOX1 transcription factor gene expression in a PI(3)K/mTORC2/Akt-dependent signaling pathway leading to EC survival under disturbed flow/oxidative stress. Binds to the ER stress response element (ERSE) upon ER stress. Binds to the consensus 5'-GATGACGTG[TG]N(3)[AT]T-3' sequence related to cAMP responsive element (CRE)-like sequences. Associates preferentially to the HDAC3 gene promoter region in a static flow-dependent manner. Binds to the CDH5/VE-cadherin gene promoter region. This chain is X-box-binding protein 1, found in Rattus norvegicus (Rat).